The primary structure comprises 975 residues: E3 ubiquitin-protein ligase BRE1A (975 aa).

The disordered stretch occupies residues 1 to 37; that stretch reads MSGIGSKRAAGEPGTSVPPEKKTAVEDSGTTVETIKL. Position 21 is an N6-acetyllysine (lysine 21). Serine 41 bears the Phosphoserine mark. The stretch at 43–90 forms a coiled coil; it reads TEELDIRTLQTKNRKLAEMLDQRQAIEDELREHIEKLERRQATDDASL. The interval 125-155 is disordered; it reads KALVVPEPEPDSDSNQERKDDRERGEGQEPA. Phosphoserine is present on residues serine 136 and serine 138. Basic and acidic residues predominate over residues 139–151; sequence NQERKDDRERGEG. Coiled coils occupy residues 168 to 375 and 429 to 898; these read EEME…EEVV and SLHK…TTKK. Residues lysine 348 and lysine 510 each carry the N6-acetyllysine modification. The disordered stretch occupies residues 507–622; sequence DLNKTRLRSG…GKHDDGRKKE (116 aa). Serine 522 carries the phosphoserine modification. A compositionally biased stretch (basic and acidic residues) spans 527-540; sequence EDPKDEPAELKQDS. The segment covering 543 to 552 has biased composition (polar residues); the sequence is LATQSAASKA. The segment covering 558-622 has biased composition (basic and acidic residues); it reads NEIKSKRDEE…GKHDDGRKKE (65 aa). Serine 562 is modified (phosphoserine). An RING-type zinc finger spans residues 922 to 961; sequence CPCCNMRKKDAVLTKCFHVFCFECVKTRYDTRQRKCPKCN.

This sequence belongs to the BRE1 family. Component of the RNF20/40 complex (also known as BRE1 complex) probably composed of 2 copies of RNF20/BRE1A and 2 copies of RNF40/BRE1B. Interacts with UBE2E1/UBCH6. Interacts with p53/TP53 and WAC. Interacts with PAF1; the interaction mediates the association of the PAF1 and RNF20/40 complexes which is a prerequsite for recruitment of UBE2A/B. Interacts with PA2G4. Interacts with FBXL19.

It localises to the nucleus. It carries out the reaction S-ubiquitinyl-[E2 ubiquitin-conjugating enzyme]-L-cysteine + [acceptor protein]-L-lysine = [E2 ubiquitin-conjugating enzyme]-L-cysteine + N(6)-ubiquitinyl-[acceptor protein]-L-lysine.. It functions in the pathway protein modification; protein ubiquitination. Functionally, component of the RNF20/40 E3 ubiquitin-protein ligase complex that mediates monoubiquitination of 'Lys-120' of histone H2B (H2BK120ub1). H2BK120ub1 gives a specific tag for epigenetic transcriptional activation and is also prerequisite for histone H3 'Lys-4' and 'Lys-79' methylation (H3K4me and H3K79me, respectively). It thereby plays a central role in histone code and gene regulation. The RNF20/40 complex forms a H2B ubiquitin ligase complex in cooperation with the E2 enzyme UBE2A or UBE2B; reports about the cooperation with UBE2E1/UBCH are contradictory. Required for transcriptional activation of Hox genes. Recruited to the MDM2 promoter, probably by being recruited by p53/TP53, and thereby acts as a transcriptional coactivator. Mediates the polyubiquitination of PA2G4 leading to its proteasome-mediated degradation. The protein is E3 ubiquitin-protein ligase BRE1A (RNF20) of Bos taurus (Bovine).